Consider the following 201-residue polypeptide: Small ribosomal subunit protein uS10m (201 aa).

Belongs to the universal ribosomal protein uS10 family. As to quaternary structure, component of the mitochondrial ribosome small subunit (28S) which comprises a 12S rRNA and about 30 distinct proteins.

It is found in the mitochondrion. The sequence is that of Small ribosomal subunit protein uS10m (MRPS10) from Pongo abelii (Sumatran orangutan).